A 331-amino-acid chain; its full sequence is Isopenicillin N synthase (331 aa).

Residues arginine 87, tyrosine 91, serine 183, and tyrosine 189 each contribute to the isopenicillin N site. Positions 87, 91, 183, 189, 214, and 216 each coordinate N-[(5S)-5-amino-5-carboxypentanoyl]-L-cysteinyl-D-valine. Positions 181-288 (LSSVVLIRYP…RQSLPFFVNL (108 aa)) constitute a Fe2OG dioxygenase domain. Histidine 214, aspartate 216, and histidine 270 together coordinate Fe(2+). Arginine 279 contacts 2-oxoglutarate. Serine 281 contributes to the isopenicillin N binding site. N-[(5S)-5-amino-5-carboxypentanoyl]-L-cysteinyl-D-valine is bound at residue serine 281.

Belongs to the iron/ascorbate-dependent oxidoreductase family. Requires Fe(2+) as cofactor.

The protein localises to the cytoplasm. It is found in the cytosol. It catalyses the reaction N-[(5S)-5-amino-5-carboxypentanoyl]-L-cysteinyl-D-valine + O2 = isopenicillin N + 2 H2O. The protein operates within antibiotic biosynthesis; penicillin G biosynthesis; penicillin G from L-alpha-aminoadipate and L-cysteine and L-valine: step 2/3. Isopenicillin N synthase; part of the gene cluster that mediates the biosynthesis of penicillin, the world's most important antibiotic. The first step of the pathway is performed by the trimodular NRPS acvA that produces the tripeptide N-[(5S)-5-amino-5-carboxypentanoyl]-L-cysteinyl-D-valine (LLD-ACV or ACV) via condensation of the 3 residues L-2-aminoadipate, L-cysteine and L-valine. The precursor amino acids for penicillin biosynthesis are withdrawn from the vacuolar amino acid pool by the MFS-type transporter penV. Each of the constituent amino acids of the tripeptide acv are activated as aminoacyl-adenylates with peptide bonds formed through the participation of amino acid thioester intermediates. The tripeptide ACV is then cyclized to form isopenicillin N (IPN) by the isopenicillin N synthase ipnA that forms the beta-lactam nucleus. Finally, the alpha-aminoadipyl side chain is exchanged for phenylacetic acid by the isopenicillin N acyltransferase aatA to yield penicillin. This step occurs in the peroxisomal matrix and the penM and paaT transporters are involved in the isopenicillin N and phenylacetic acid import into the peroxisome, respectively. This is Isopenicillin N synthase from Penicillium rubens (strain ATCC 28089 / DSM 1075 / NRRL 1951 / Wisconsin 54-1255) (Penicillium chrysogenum).